The sequence spans 110 residues: Snake venom vascular endothelial growth factor toxin HF (110 aa).

Gln-1 is subject to Pyrrolidone carboxylic acid. 3 cysteine pairs are disulfide-bonded: Cys-14-Cys-56, Cys-45-Cys-91, and Cys-49-Cys-93.

The protein belongs to the PDGF/VEGF growth factor family. Snake venom VEGF subfamily. In terms of assembly, homodimer; disulfide-linked. Interacts with VEGF receptor-2 (KDR) with high affinity. In terms of tissue distribution, expressed by the venom gland.

It is found in the secreted. Its function is as follows. Snake venom VEGFs that may contribute to venom dispersion and prey subjugation by inducing vascular permeability and hypotension. This protein induces an increase in capillary permeability after intradermal injection, as well as a drastic hypotensive effect after intravenous injection. The hypotension is mediated by nitric oxide (NO), which is produced by VEGF-activated endothelium NO synthase. Also induces angiogenesis in vitro, probably through VEGF receptor (KDR/VEGFR-2) signaling. This chain is Snake venom vascular endothelial growth factor toxin HF, found in Vipera aspis aspis (Aspic viper).